Here is an 850-residue protein sequence, read N- to C-terminus: Rho guanine nucleotide exchange factor 33 (850 aa).

2 stretches are compositionally biased toward basic and acidic residues: residues 1-13 and 98-113; these read MEKSKAKQGENEH and EEMQQKIEQLQQEKRR. Disordered regions lie at residues 1-21 and 98-209; these read MEKSKAKQGENEHMPVNNPST and EEMQ…DENL. The stretch at 54–128 forms a coiled coil; that stretch reads LEEKVKSCRC…KAKKAQKEEH (75 aa). Residues 130 to 149 are compositionally biased toward low complexity; it reads AQAGPASAPAPGSAPTQGSP. Residues 164–175 show a composition bias toward polar residues; the sequence is DFTNMLPSQNYE. The DH domain occupies 273–448; that stretch reads KRQTVALELL…RVFISHYTLL (176 aa). Disordered regions lie at residues 504–550 and 702–850; these read EMLQ…WELE and AAQA…WGWW. 2 stretches are compositionally biased toward low complexity: residues 510 to 520 and 754 to 770; these read PSSSSSAPAVS and APHGPAAAAAASRGAPR. At R766 the chain carries Omega-N-methylarginine. Positions 773-783 are enriched in polar residues; the sequence is FPQQRSQSEKQ. Basic and acidic residues predominate over residues 784 to 806; it reads TYLEEMHLEDATRFCPKEERESE. Basic residues predominate over residues 826-835; it reads SFRKLFKKKN.

The sequence is that of Rho guanine nucleotide exchange factor 33 (Arhgef33) from Mus musculus (Mouse).